Consider the following 361-residue polypeptide: UDP-D-xylose:L-fucose alpha-1,3-D-xylosyltransferase 1 (361 aa).

A disordered region spans residues 1 to 21; the sequence is MEQKQHILKQSTFSSSPSSYS. The Cytoplasmic segment spans residues 1–34; sequence MEQKQHILKQSTFSSSPSSYSSISDRPISLLSRN. The segment covering 11-21 has biased composition (low complexity); the sequence is STFSSSPSSYS. The helical; Signal-anchor for type II membrane protein transmembrane segment at 35-55 threads the bilayer; that stretch reads GLLLLLLALVLLLGVLLPWPG. The Lumenal portion of the chain corresponds to 56–361; that stretch reads SPLFLFPNRL…ALESPLGKLE (306 aa). N-linked (GlcNAc...) asparagine glycans are attached at residues asparagine 92 and asparagine 167. The DXD motif signature appears at 190–192; the sequence is DVD. 2 N-linked (GlcNAc...) asparagine glycosylation sites follow: asparagine 222 and asparagine 286.

Belongs to the glycosyltransferase 77 family. The cofactor is Mn(2+). Mg(2+) serves as cofactor. In terms of processing, glycosylated. As to expression, expressed in roots, rosette leaves, cauline leaves and stems.

The protein resides in the golgi apparatus membrane. Catalyzes the transfer of D-xylose from UDP-alpha-D-xylose onto L-fucose. Probably involved in the biosynthesis of rhamnogalacturonan II (RG-II) through xylosylation of the internal fucose moiety of the A-chain of RG-II, a structurally complex pectic polysaccharide of the primary cell wall. RG-II is essential for the cell wall integrity of rapidly growing tissues such as roots and pollen tube growth and elongation. The protein is UDP-D-xylose:L-fucose alpha-1,3-D-xylosyltransferase 1 of Arabidopsis thaliana (Mouse-ear cress).